Consider the following 692-residue polypeptide: Elongation factor G (692 aa).

A tr-type G domain is found at 8-282 (AKTRNIGIMA…AVIDYLPSPL (275 aa)). GTP-binding positions include 17 to 24 (AHVDAGKT), 81 to 85 (DTPGH), and 135 to 138 (NKMD).

The protein belongs to the TRAFAC class translation factor GTPase superfamily. Classic translation factor GTPase family. EF-G/EF-2 subfamily.

The protein localises to the cytoplasm. In terms of biological role, catalyzes the GTP-dependent ribosomal translocation step during translation elongation. During this step, the ribosome changes from the pre-translocational (PRE) to the post-translocational (POST) state as the newly formed A-site-bound peptidyl-tRNA and P-site-bound deacylated tRNA move to the P and E sites, respectively. Catalyzes the coordinated movement of the two tRNA molecules, the mRNA and conformational changes in the ribosome. This chain is Elongation factor G, found in Streptococcus uberis (strain ATCC BAA-854 / 0140J).